An 808-amino-acid chain; its full sequence is Probable potassium transporter 3 (808 aa).

Over 1-34 (MPVADCESGLSPADVTGAGAANGNPGHWRSYYRH) the chain is Cytoplasmic. Residues 35–55 (VLLLAYQSCGVVYGDLSTSPL) form a helical membrane-spanning segment. Over 56–81 (YVYKSTFIIGSLRRFQDEEIVFGVFS) the chain is Extracellular. A helical transmembrane segment spans residues 82-102 (LVFWTLTLIPLLKYVFIVLAA). The Cytoplasmic segment spans residues 103–167 (DDNGEGGTFA…FLENHRKSRT (65 aa)). The helical transmembrane segment at 168–188 (FLLVTVLFGASLVIGDGVLTP) threads the bilayer. The Extracellular segment spans residues 189–204 (PMSVLSSFSGLQVHST). A helical membrane pass occupies residues 205–225 (ALTSGEVEILSCTVLVCLFMV). Topologically, residues 226-232 (QHWGTHR) are cytoplasmic. The helical transmembrane segment at 233-253 (VAFLFAPVVIVWLLLLGALGV) threads the bilayer. Residues 254 to 283 (YNIVVWNPRVLRALSPYYLVRFFQHTGKDG) are Extracellular-facing. Residues 284-304 (WISLGGILLSMTGTEAMYADL) traverse the membrane as a helical segment. The Cytoplasmic segment spans residues 305–313 (GHFTAASIR). Residues 314 to 334 (VAFVGLIYPCLVLQYMGQAAF) form a helical membrane-spanning segment. Over 335 to 354 (LSKSPHCDIHFVFFESIPTG) the chain is Extracellular. Residues 355 to 375 (IFWPVLVIATLAAIVGSQAVI) traverse the membrane as a helical segment. The Cytoplasmic segment spans residues 376 to 406 (SATFSIVRQCTALGCFPRVKIVHTSRRIHGQ). A helical transmembrane segment spans residues 407–427 (IYSPEINWILMLLCIAVTMGL). Over 428–439 (RDTTLIGNAYGM) the chain is Extracellular. The helical transmembrane segment at 440–460 (ACAGVMLVTTLLMALVIVFVW) threads the bilayer. The Cytoplasmic portion of the chain corresponds to 461–464 (QYSC). Residues 465 to 485 (LVAALFLVAFGVVEAVYLSAA) form a helical membrane-spanning segment. Residues 486–491 (LMKVPQ) lie on the Extracellular side of the membrane. Residues 492–512 (GGWLPLVLSLVFVAVMYVWHY) traverse the membrane as a helical segment. The Cytoplasmic segment spans residues 513–808 (GTRRKHQFDV…LIEVGMIYYV (296 aa)).

This sequence belongs to the HAK/KUP transporter (TC 2.A.72.3) family.

It is found in the membrane. High-affinity potassium transporter. This is Probable potassium transporter 3 (HAK3) from Oryza sativa subsp. japonica (Rice).